Consider the following 258-residue polypeptide: Type III pantothenate kinase (258 aa).

6 to 13 lines the ATP pocket; sequence DVGNTNIV. Substrate-binding positions include Y100 and 107–110; that span reads GADR. The active-site Proton acceptor is D109. Residue D129 coordinates K(+). T132 is a binding site for ATP. T184 serves as a coordination point for substrate.

Belongs to the type III pantothenate kinase family. As to quaternary structure, homodimer. NH4(+) serves as cofactor. Requires K(+) as cofactor.

It is found in the cytoplasm. It carries out the reaction (R)-pantothenate + ATP = (R)-4'-phosphopantothenate + ADP + H(+). Its pathway is cofactor biosynthesis; coenzyme A biosynthesis; CoA from (R)-pantothenate: step 1/5. Its function is as follows. Catalyzes the phosphorylation of pantothenate (Pan), the first step in CoA biosynthesis. The polypeptide is Type III pantothenate kinase (Desulfitobacterium hafniense (strain DSM 10664 / DCB-2)).